The primary structure comprises 238 residues: Aliphatic sulfonates import ATP-binding protein SsuB (238 aa).

The ABC transporter domain maps to 7-221 (VSLHQVHQQF…RPGDAAFASL (215 aa)). 39 to 46 (GRSGSGKT) is a binding site for ATP.

It belongs to the ABC transporter superfamily. Aliphatic sulfonates importer (TC 3.A.1.17.2) family. In terms of assembly, the complex is composed of two ATP-binding proteins (SsuB), two transmembrane proteins (SsuC) and a solute-binding protein (SsuA).

The protein localises to the cell inner membrane. The enzyme catalyses ATP + H2O + aliphatic sulfonate-[sulfonate-binding protein]Side 1 = ADP + phosphate + aliphatic sulfonateSide 2 + [sulfonate-binding protein]Side 1.. Functionally, part of the ABC transporter complex SsuABC involved in aliphatic sulfonates import. Responsible for energy coupling to the transport system. This Granulibacter bethesdensis (strain ATCC BAA-1260 / CGDNIH1) protein is Aliphatic sulfonates import ATP-binding protein SsuB.